The primary structure comprises 172 residues: uncharacterized protein (172 aa).

It belongs to the baculoviridae 19 kDa protein family.

This is an uncharacterized protein from Orgyia pseudotsugata multicapsid polyhedrosis virus (OpMNPV).